Reading from the N-terminus, the 237-residue chain is UPF0280 protein Mthe_1297 (237 aa).

This sequence belongs to the UPF0280 family.

The chain is UPF0280 protein Mthe_1297 from Methanothrix thermoacetophila (strain DSM 6194 / JCM 14653 / NBRC 101360 / PT) (Methanosaeta thermophila).